Consider the following 476-residue polypeptide: Bifunctional protein HldE (476 aa).

The segment at 1 to 318 (MAQYSAEFKQ…ENAIHARPET (318 aa)) is ribokinase. 195-198 (NMSE) contributes to the ATP binding site. Residue D264 is part of the active site. The cytidylyltransferase stretch occupies residues 344–476 (MTNGCFDILH…VIEKIKLLKD (133 aa)).

In the N-terminal section; belongs to the carbohydrate kinase PfkB family. The protein in the C-terminal section; belongs to the cytidylyltransferase family. Homodimer.

The enzyme catalyses D-glycero-beta-D-manno-heptose 7-phosphate + ATP = D-glycero-beta-D-manno-heptose 1,7-bisphosphate + ADP + H(+). It catalyses the reaction D-glycero-beta-D-manno-heptose 1-phosphate + ATP + H(+) = ADP-D-glycero-beta-D-manno-heptose + diphosphate. The protein operates within nucleotide-sugar biosynthesis; ADP-L-glycero-beta-D-manno-heptose biosynthesis; ADP-L-glycero-beta-D-manno-heptose from D-glycero-beta-D-manno-heptose 7-phosphate: step 1/4. It participates in nucleotide-sugar biosynthesis; ADP-L-glycero-beta-D-manno-heptose biosynthesis; ADP-L-glycero-beta-D-manno-heptose from D-glycero-beta-D-manno-heptose 7-phosphate: step 3/4. Catalyzes the phosphorylation of D-glycero-D-manno-heptose 7-phosphate at the C-1 position to selectively form D-glycero-beta-D-manno-heptose-1,7-bisphosphate. In terms of biological role, catalyzes the ADP transfer from ATP to D-glycero-beta-D-manno-heptose 1-phosphate, yielding ADP-D-glycero-beta-D-manno-heptose. This Haemophilus influenzae (strain PittGG) protein is Bifunctional protein HldE.